A 357-amino-acid polypeptide reads, in one-letter code: UDP-N-acetylglucosamine--N-acetylmuramyl-(pentapeptide) pyrophosphoryl-undecaprenol N-acetylglucosamine transferase (357 aa).

UDP-N-acetyl-alpha-D-glucosamine is bound by residues 12–14 (TGG), N124, R163, S189, I243, 262–267 (ALTVSE), and Q288.

This sequence belongs to the glycosyltransferase 28 family. MurG subfamily.

The protein localises to the cell inner membrane. The catalysed reaction is di-trans,octa-cis-undecaprenyl diphospho-N-acetyl-alpha-D-muramoyl-L-alanyl-D-glutamyl-meso-2,6-diaminopimeloyl-D-alanyl-D-alanine + UDP-N-acetyl-alpha-D-glucosamine = di-trans,octa-cis-undecaprenyl diphospho-[N-acetyl-alpha-D-glucosaminyl-(1-&gt;4)]-N-acetyl-alpha-D-muramoyl-L-alanyl-D-glutamyl-meso-2,6-diaminopimeloyl-D-alanyl-D-alanine + UDP + H(+). Its pathway is cell wall biogenesis; peptidoglycan biosynthesis. Its function is as follows. Cell wall formation. Catalyzes the transfer of a GlcNAc subunit on undecaprenyl-pyrophosphoryl-MurNAc-pentapeptide (lipid intermediate I) to form undecaprenyl-pyrophosphoryl-MurNAc-(pentapeptide)GlcNAc (lipid intermediate II). In Pseudomonas paraeruginosa (strain DSM 24068 / PA7) (Pseudomonas aeruginosa (strain PA7)), this protein is UDP-N-acetylglucosamine--N-acetylmuramyl-(pentapeptide) pyrophosphoryl-undecaprenol N-acetylglucosamine transferase.